The sequence spans 214 residues: Pyridoxine/pyridoxamine 5'-phosphate oxidase (214 aa).

Residues 11-14 and lysine 68 each bind substrate; that span reads RREY. Residues 63–68, 78–79, arginine 84, lysine 85, and glutamine 107 contribute to the FMN site; these read RLVLLK and FT. 2 residues coordinate substrate: tyrosine 125 and arginine 129. FMN-binding positions include 142–143 and tryptophan 187; that span reads QS. 193–195 serves as a coordination point for substrate; the sequence is RLH. Arginine 197 contacts FMN.

This sequence belongs to the pyridoxamine 5'-phosphate oxidase family. In terms of assembly, homodimer. The cofactor is FMN.

It carries out the reaction pyridoxamine 5'-phosphate + O2 + H2O = pyridoxal 5'-phosphate + H2O2 + NH4(+). The enzyme catalyses pyridoxine 5'-phosphate + O2 = pyridoxal 5'-phosphate + H2O2. It participates in cofactor metabolism; pyridoxal 5'-phosphate salvage; pyridoxal 5'-phosphate from pyridoxamine 5'-phosphate: step 1/1. The protein operates within cofactor metabolism; pyridoxal 5'-phosphate salvage; pyridoxal 5'-phosphate from pyridoxine 5'-phosphate: step 1/1. Catalyzes the oxidation of either pyridoxine 5'-phosphate (PNP) or pyridoxamine 5'-phosphate (PMP) into pyridoxal 5'-phosphate (PLP). This is Pyridoxine/pyridoxamine 5'-phosphate oxidase from Blochmanniella floridana.